The following is a 222-amino-acid chain: Thiamine-phosphate synthase (222 aa).

4-amino-2-methyl-5-(diphosphooxymethyl)pyrimidine is bound by residues 40 to 44 (QLRDK) and Asn81. 2 residues coordinate Mg(2+): Asp82 and Asp101. Ser120 contributes to the 4-amino-2-methyl-5-(diphosphooxymethyl)pyrimidine binding site. 146–148 (TPT) provides a ligand contact to 2-[(2R,5Z)-2-carboxy-4-methylthiazol-5(2H)-ylidene]ethyl phosphate. Residue Lys149 coordinates 4-amino-2-methyl-5-(diphosphooxymethyl)pyrimidine. Residue Gly178 participates in 2-[(2R,5Z)-2-carboxy-4-methylthiazol-5(2H)-ylidene]ethyl phosphate binding.

It belongs to the thiamine-phosphate synthase family. Mg(2+) is required as a cofactor.

The enzyme catalyses 2-[(2R,5Z)-2-carboxy-4-methylthiazol-5(2H)-ylidene]ethyl phosphate + 4-amino-2-methyl-5-(diphosphooxymethyl)pyrimidine + 2 H(+) = thiamine phosphate + CO2 + diphosphate. It carries out the reaction 2-(2-carboxy-4-methylthiazol-5-yl)ethyl phosphate + 4-amino-2-methyl-5-(diphosphooxymethyl)pyrimidine + 2 H(+) = thiamine phosphate + CO2 + diphosphate. It catalyses the reaction 4-methyl-5-(2-phosphooxyethyl)-thiazole + 4-amino-2-methyl-5-(diphosphooxymethyl)pyrimidine + H(+) = thiamine phosphate + diphosphate. It participates in cofactor biosynthesis; thiamine diphosphate biosynthesis; thiamine phosphate from 4-amino-2-methyl-5-diphosphomethylpyrimidine and 4-methyl-5-(2-phosphoethyl)-thiazole: step 1/1. Condenses 4-methyl-5-(beta-hydroxyethyl)thiazole monophosphate (THZ-P) and 2-methyl-4-amino-5-hydroxymethyl pyrimidine pyrophosphate (HMP-PP) to form thiamine monophosphate (TMP). This is Thiamine-phosphate synthase from Mycobacterium tuberculosis (strain ATCC 25177 / H37Ra).